The primary structure comprises 391 residues: DNA repair protein NreB (391 aa).

A C4-type zinc finger spans residues 3–17 (CIECRGRMLCSRKVC). The PIP motif motif lies at 384 to 391 (QRTLWEFM).

It belongs to the Nre family. Interacts with the DNA polymerase sliding clamp (PCNA) via the PIP (PCNA-interacting peptide) motif.

In terms of biological role, involved in DNA damage repair. The polypeptide is DNA repair protein NreB (Archaeoglobus fulgidus (strain ATCC 49558 / DSM 4304 / JCM 9628 / NBRC 100126 / VC-16)).